An 81-amino-acid polypeptide reads, in one-letter code: Sulfur carrier protein TusA (81 aa).

C19 functions as the Cysteine persulfide intermediate in the catalytic mechanism.

This sequence belongs to the sulfur carrier protein TusA family.

It is found in the cytoplasm. Sulfur carrier protein which probably makes part of a sulfur-relay system. In Vibrio vulnificus (strain CMCP6), this protein is Sulfur carrier protein TusA.